The following is a 201-amino-acid chain: Esterase TesA (201 aa).

Residues 1–21 (MRALLLSGCLALVLLTQQAAA) form the signal peptide. The Nucleophile role is filled by Ser30. Active-site residues include Asp177 and His180.

The protein belongs to the 'GDSL' lipolytic enzyme family.

The protein resides in the secreted. It catalyses the reaction a carboxylic ester + H2O = an alcohol + a carboxylate + H(+). Esterase that exhibits the highest activity towards Tween detergents and p-nitrophenyl esters of short acyl chain length. Also displays a low thioesterase activity towards palmitoyl-coenzyme A, but is not active towards acetyl-coenzyme A. The protein is Esterase TesA (tesA) of Pseudomonas aeruginosa (strain ATCC 15692 / DSM 22644 / CIP 104116 / JCM 14847 / LMG 12228 / 1C / PRS 101 / PAO1).